The sequence spans 178 residues: N-alpha-acetyltransferase 20 (178 aa).

In terms of domain architecture, N-acetyltransferase spans 2 to 157; the sequence is TTLRAFTCDD…DAYDMRKALS (156 aa).

It belongs to the acetyltransferase family. ARD1 subfamily. Component of the N-terminal acetyltransferase B (NatB) complex which is composed of naa20 and naa25.

Its subcellular location is the cytoplasm. It is found in the nucleus. It carries out the reaction N-terminal L-methionyl-L-asparaginyl-[protein] + acetyl-CoA = N-terminal N(alpha)-acetyl-L-methionyl-L-asparaginyl-[protein] + CoA + H(+). It catalyses the reaction N-terminal L-methionyl-L-glutaminyl-[protein] + acetyl-CoA = N-terminal N(alpha)-acetyl-L-methionyl-L-glutaminyl-[protein] + CoA + H(+). The enzyme catalyses N-terminal L-methionyl-L-aspartyl-[protein] + acetyl-CoA = N-terminal N(alpha)-acetyl-L-methionyl-L-aspartyl-[protein] + CoA + H(+). The catalysed reaction is N-terminal L-methionyl-L-glutamyl-[protein] + acetyl-CoA = N-terminal N(alpha)-acetyl-L-methionyl-L-glutamyl-[protein] + CoA + H(+). In terms of biological role, catalytic subunit of the NatB complex which catalyzes acetylation of the N-terminal methionine residues of peptides beginning with Met-Asp, Met-Glu, Met-Asn and Met-Gln. Proteins with cell cycle functions are overrepresented in the pool of NatB substrates. Required for maintaining the structure and function of actomyosin fibers and for proper cellular migration. This Danio rerio (Zebrafish) protein is N-alpha-acetyltransferase 20 (naa20).